A 151-amino-acid polypeptide reads, in one-letter code: Large ribosomal subunit protein uL13 (151 aa).

The tract at residues 129 to 151 is disordered; sequence SNHPHQAQKPETLTINTIPGGNN.

Belongs to the universal ribosomal protein uL13 family. In terms of assembly, part of the 50S ribosomal subunit.

This protein is one of the early assembly proteins of the 50S ribosomal subunit, although it is not seen to bind rRNA by itself. It is important during the early stages of 50S assembly. This chain is Large ribosomal subunit protein uL13, found in Gloeothece citriformis (strain PCC 7424) (Cyanothece sp. (strain PCC 7424)).